We begin with the raw amino-acid sequence, 263 residues long: 5'-nucleotidase SurE (263 aa).

A divalent metal cation contacts are provided by Asp-10, Asp-11, Ser-41, and Asn-95.

Belongs to the SurE nucleotidase family. The cofactor is a divalent metal cation.

It is found in the cytoplasm. It carries out the reaction a ribonucleoside 5'-phosphate + H2O = a ribonucleoside + phosphate. Functionally, nucleotidase that shows phosphatase activity on nucleoside 5'-monophosphates. The polypeptide is 5'-nucleotidase SurE (Methanoculleus marisnigri (strain ATCC 35101 / DSM 1498 / JR1)).